A 349-amino-acid polypeptide reads, in one-letter code: Pinopsin (349 aa).

Positions 1–16 (MDPTNSPQEPPHTSTP) are enriched in polar residues. A disordered region spans residues 1-22 (MDPTNSPQEPPHTSTPGPFDGP). Residues 1 to 32 (MDPTNSPQEPPHTSTPGPFDGPQWPHQAPRGM) lie on the Extracellular side of the membrane. The helical transmembrane segment at 33 to 57 (YLSVAVLMGIVVISASVVNGLVIVV) threads the bilayer. Topologically, residues 58–69 (SIRYKKLRSPLN) are cytoplasmic. A helical transmembrane segment spans residues 70-94 (YILVNLAMADLLVTLCGSSVSFSNN). The Extracellular segment spans residues 95 to 109 (INGFFVFGKRLCELE). The cysteines at positions 106 and 183 are disulfide-linked. The chain crosses the membrane as a helical span at residues 110 to 129 (GFMVSLTGIVGLWSLAILAL). Topologically, residues 130–148 (ERYVVVCRPLGDFRFQHRH) are cytoplasmic. Residues 149–172 (AVTGCAFTWVWSLLWTTPPLLGWS) traverse the membrane as a helical segment. The Extracellular segment spans residues 173–196 (SYVPEGLRTSCGPNWYTGGSNNNS). A glycan (N-linked (GlcNAc...) asparagine) is linked at asparagine 194. Residues 197 to 224 (YILTLFVTCFVMPLSLILFSYANLLMTL) form a helical membrane-spanning segment. Residues 225–246 (RAAAAQQQESDTTQQAERQVTR) lie on the Cytoplasmic side of the membrane. The helical transmembrane segment at 247-270 (MVVAMVMAFLICWLPYTTFALVVA) threads the bilayer. Residues 271–278 (TNKDIAIQ) lie on the Extracellular side of the membrane. A helical membrane pass occupies residues 279 to 303 (PALASLPSYFSKTATVYNPIIYVFM). Lysine 290 is subject to N6-(retinylidene)lysine. Over 304 to 349 (NKQFQSCLLKMLCCGHHPRGTGRTAPAAPASPTDGLRNKVTPSHPV) the chain is Cytoplasmic. 2 S-palmitoyl cysteine lipidation sites follow: cysteine 316 and cysteine 317. Residues 325–349 (GRTAPAAPASPTDGLRNKVTPSHPV) form a disordered region.

The protein belongs to the G-protein coupled receptor 1 family. Opsin subfamily. Phosphorylated on some or all of the serine and threonine residues present in the C-terminal region. Pineal gland.

Its subcellular location is the membrane. Its function is as follows. Produces a slow and prolonged phototransduction response consistent with the non-visual function of pineal photoreception. The polypeptide is Pinopsin (Columba livia (Rock dove)).